A 289-amino-acid chain; its full sequence is RNA-binding protein CP29B, chloroplastic (289 aa).

A chloroplast-targeting transit peptide spans Met-1–Asn-62. Phosphoserine is present on residues Ser-6 and Ser-12. Residue Val-63 is modified to N-acetylvaline. The RRM 1 domain occupies Leu-91 to Pro-169. The disordered stretch occupies residues Asp-158–Gly-199. Positions Pro-170–Gly-203 are linker (Gly-rich). The span at Ser-178–Ser-187 shows a compositional bias: low complexity. Gly residues predominate over residues Ser-188–Gly-199. The RRM 2 domain maps to Asn-204 to Ala-282.

In terms of processing, ADP-ribosylated by the Pseudomonas syringae type III effector HopU1. ADP-ribosylation reduces the ability of the protein to bind RNA. Post-translationally, phosphorylated on tyrosine residues after treatment with abscisic acid (ABA). Phosphorylation may reduce the ability of the protein to bind RNA.

The protein localises to the plastid. The protein resides in the chloroplast. Could be involved in splicing and/or processing of chloroplast RNA's. This Arabidopsis thaliana (Mouse-ear cress) protein is RNA-binding protein CP29B, chloroplastic.